Reading from the N-terminus, the 213-residue chain is Protein-L-isoaspartate O-methyltransferase (213 aa).

Ser-58 is a catalytic residue.

It belongs to the methyltransferase superfamily. L-isoaspartyl/D-aspartyl protein methyltransferase family.

Its subcellular location is the cytoplasm. It catalyses the reaction [protein]-L-isoaspartate + S-adenosyl-L-methionine = [protein]-L-isoaspartate alpha-methyl ester + S-adenosyl-L-homocysteine. Its function is as follows. Catalyzes the methyl esterification of L-isoaspartyl residues in peptides and proteins that result from spontaneous decomposition of normal L-aspartyl and L-asparaginyl residues. It plays a role in the repair and/or degradation of damaged proteins. The protein is Protein-L-isoaspartate O-methyltransferase of Chlorobaculum tepidum (strain ATCC 49652 / DSM 12025 / NBRC 103806 / TLS) (Chlorobium tepidum).